We begin with the raw amino-acid sequence, 290 residues long: uncharacterized protein (290 aa).

The 245-residue stretch at P30 to T274 folds into the AB hydrolase-1 domain. H269 is a catalytic residue.

It belongs to the DmpD/TodF/XylF esterase family.

This is an uncharacterized protein from Saccharomyces cerevisiae (strain ATCC 204508 / S288c) (Baker's yeast).